The primary structure comprises 375 residues: Glutamate 5-kinase (375 aa).

K13 provides a ligand contact to ATP. Residues S54, D141, and N153 each coordinate substrate. Residues 173-174 and 216-222 each bind ATP; these read TD and TGGMATK. The region spanning 281 to 359 is the PUA domain; the sequence is TGKIFIDAGA…EAIAAVLGYV (79 aa).

Belongs to the glutamate 5-kinase family.

It is found in the cytoplasm. It catalyses the reaction L-glutamate + ATP = L-glutamyl 5-phosphate + ADP. It participates in amino-acid biosynthesis; L-proline biosynthesis; L-glutamate 5-semialdehyde from L-glutamate: step 1/2. Functionally, catalyzes the transfer of a phosphate group to glutamate to form L-glutamate 5-phosphate. This Synechocystis sp. (strain ATCC 27184 / PCC 6803 / Kazusa) protein is Glutamate 5-kinase.